The sequence spans 137 residues: Large ribosomal subunit protein uL16 (137 aa).

It belongs to the universal ribosomal protein uL16 family. As to quaternary structure, part of the 50S ribosomal subunit.

In terms of biological role, binds 23S rRNA and is also seen to make contacts with the A and possibly P site tRNAs. The protein is Large ribosomal subunit protein uL16 of Wolbachia pipientis wMel.